Reading from the N-terminus, the 608-residue chain is Elongation factor 4 (608 aa).

The tr-type G domain occupies 11 to 193 (SHIRNFSIVA…AIVHKLPAPK (183 aa)). GTP is bound by residues 23–28 (DHGKST) and 140–143 (NKID).

The protein belongs to the TRAFAC class translation factor GTPase superfamily. Classic translation factor GTPase family. LepA subfamily.

The protein localises to the cell inner membrane. The catalysed reaction is GTP + H2O = GDP + phosphate + H(+). In terms of biological role, required for accurate and efficient protein synthesis under certain stress conditions. May act as a fidelity factor of the translation reaction, by catalyzing a one-codon backward translocation of tRNAs on improperly translocated ribosomes. Back-translocation proceeds from a post-translocation (POST) complex to a pre-translocation (PRE) complex, thus giving elongation factor G a second chance to translocate the tRNAs correctly. Binds to ribosomes in a GTP-dependent manner. This Rhizobium meliloti (strain 1021) (Ensifer meliloti) protein is Elongation factor 4.